A 432-amino-acid chain; its full sequence is Adenylosuccinate synthetase (432 aa).

GTP contacts are provided by residues 13–19 (GDEGKGK) and 41–43 (GHT). D14 functions as the Proton acceptor in the catalytic mechanism. D14 and G41 together coordinate Mg(2+). Residues 14-17 (DEGK), 39-42 (NAGH), T130, R144, Q225, T240, and R304 contribute to the IMP site. Catalysis depends on H42, which acts as the Proton donor. Position 300 to 306 (300 to 306 (AVTGRPR)) interacts with substrate. Residues R306, 332–334 (KLD), and 415–417 (STG) contribute to the GTP site.

The protein belongs to the adenylosuccinate synthetase family. As to quaternary structure, homodimer. Mg(2+) is required as a cofactor.

The protein localises to the cytoplasm. The catalysed reaction is IMP + L-aspartate + GTP = N(6)-(1,2-dicarboxyethyl)-AMP + GDP + phosphate + 2 H(+). Its pathway is purine metabolism; AMP biosynthesis via de novo pathway; AMP from IMP: step 1/2. Functionally, plays an important role in the de novo pathway of purine nucleotide biosynthesis. Catalyzes the first committed step in the biosynthesis of AMP from IMP. The sequence is that of Adenylosuccinate synthetase from Actinobacillus pleuropneumoniae serotype 5b (strain L20).